Consider the following 316-residue polypeptide: Acetyl-coenzyme A carboxylase carboxyl transferase subunit alpha (316 aa).

The CoA carboxyltransferase C-terminal domain maps to Glu-35–Asp-292.

Belongs to the AccA family. As to quaternary structure, acetyl-CoA carboxylase is a heterohexamer composed of biotin carboxyl carrier protein (AccB), biotin carboxylase (AccC) and two subunits each of ACCase subunit alpha (AccA) and ACCase subunit beta (AccD).

It localises to the cytoplasm. It catalyses the reaction N(6)-carboxybiotinyl-L-lysyl-[protein] + acetyl-CoA = N(6)-biotinyl-L-lysyl-[protein] + malonyl-CoA. It functions in the pathway lipid metabolism; malonyl-CoA biosynthesis; malonyl-CoA from acetyl-CoA: step 1/1. Component of the acetyl coenzyme A carboxylase (ACC) complex. First, biotin carboxylase catalyzes the carboxylation of biotin on its carrier protein (BCCP) and then the CO(2) group is transferred by the carboxyltransferase to acetyl-CoA to form malonyl-CoA. The chain is Acetyl-coenzyme A carboxylase carboxyl transferase subunit alpha from Alkaliphilus oremlandii (strain OhILAs) (Clostridium oremlandii (strain OhILAs)).